A 511-amino-acid polypeptide reads, in one-letter code: uncharacterized protein (511 aa).

The region spanning 13 to 45 (IYDALNMLVYDYLLKMKYEGSAKIFFNEAGLEN) is the LisH domain. The disordered stretch occupies residues 172 to 212 (PRFEEQGVPPAKMAPKQFRDEGRSGNVESPSIATNQEGSSP). Over residues 197-210 (NVESPSIATNQEGS) the composition is skewed to polar residues.

This is an uncharacterized protein from Encephalitozoon cuniculi (strain GB-M1) (Microsporidian parasite).